A 510-amino-acid polypeptide reads, in one-letter code: Conditioned medium factor receptor 1 (510 aa).

At 1–36 (MDSKYIQKTLSAITEQITKNAAVQKVLDNKFVKEHK) the chain is on the cytoplasmic side. Residues 37-55 (YAAAAATVGLGVVAATTIV) form a helical membrane-spanning segment. The Extracellular segment spans residues 56–510 (KAVNCEGKRY…QGKKQIKKLD (455 aa)).

It is found in the membrane. In terms of biological role, receptor for cmfA, that appears to mediate the G-independent cmfA signal transduction. The sequence is that of Conditioned medium factor receptor 1 (cmfB) from Dictyostelium discoideum (Social amoeba).